A 184-amino-acid polypeptide reads, in one-letter code: Ribose 1,5-bisphosphate phosphokinase PhnN (184 aa).

ATP is bound at residue 11–18 (GPSGAGKD).

This sequence belongs to the ribose 1,5-bisphosphokinase family.

The enzyme catalyses alpha-D-ribose 1,5-bisphosphate + ATP = 5-phospho-alpha-D-ribose 1-diphosphate + ADP. It functions in the pathway metabolic intermediate biosynthesis; 5-phospho-alpha-D-ribose 1-diphosphate biosynthesis; 5-phospho-alpha-D-ribose 1-diphosphate from D-ribose 5-phosphate (route II): step 3/3. Catalyzes the phosphorylation of ribose 1,5-bisphosphate to 5-phospho-D-ribosyl alpha-1-diphosphate (PRPP). In Burkholderia pseudomallei (strain K96243), this protein is Ribose 1,5-bisphosphate phosphokinase PhnN.